The following is an 873-amino-acid chain: Polyribonucleotide nucleotidyltransferase (873 aa).

The Mg(2+) site is built by D521 and D527. In terms of domain architecture, KH spans 587–646 (PRIITTTVPVDKIGEVIGPKGKMINQIQEDTGAEIAIEDDGTVYISSEGGEAAEKAKQII). An S1 motif domain is found at 658–730 (GETYKGTVVK…DRGKISLAIP (73 aa)). The segment at 727–873 (LAIPGFENQE…VRRDFDPFDD (147 aa)) is disordered. The span at 742-857 (RRSDDRPRRD…EYREGREVRH (116 aa)) shows a compositional bias: basic and acidic residues.

It belongs to the polyribonucleotide nucleotidyltransferase family. It depends on Mg(2+) as a cofactor.

It is found in the cytoplasm. The enzyme catalyses RNA(n+1) + phosphate = RNA(n) + a ribonucleoside 5'-diphosphate. In terms of biological role, involved in mRNA degradation. Catalyzes the phosphorolysis of single-stranded polyribonucleotides processively in the 3'- to 5'-direction. This Bifidobacterium animalis subsp. lactis (strain AD011) protein is Polyribonucleotide nucleotidyltransferase.